Here is a 250-residue protein sequence, read N- to C-terminus: Cytochrome c oxidase subunit 2 (250 aa).

Topologically, residues 1–27 (MGLLFNNLIMNFDAPSPWGIYFQDSAT) are mitochondrial intermembrane. Residues 28–61 (PQMEGLVELHDNIMYYLVVILFGVGWILLSIIRN) form a helical membrane-spanning segment. At 62–77 (YISTKSPISHKYLNHG) the chain is on the mitochondrial matrix side. Residues 78 to 107 (TLIELIWTITPAVILILIAFPSFKLLYLMD) traverse the membrane as a helical segment. Topologically, residues 108–250 (EVSDPSMSVL…EKFLTWLEEQ (143 aa)) are mitochondrial intermembrane. Cu cation is bound by residues His185, Cys220, Glu222, Cys224, His228, and Met231. Glu222 provides a ligand contact to Mg(2+).

The protein belongs to the cytochrome c oxidase subunit 2 family. Component of the cytochrome c oxidase (complex IV, CIV), a multisubunit enzyme composed of 11 subunits. The complex is composed of a catalytic core of 3 subunits Cox1, Cox2 and Cox3, encoded in the mitochondrial DNA, and 8 supernumerary subunits Cox4, Cox5a/Cox5, Cox6, Cox7, Cox8, Cox7a/Cox9, Cox6b/Cox12 and Cox6a/Cox13, which are encoded in the nuclear genome. The complex exists as a monomer or a dimer and forms respiratory supercomplexes (SCs) in the inner mitochondrial membrane with NADH-ubiquinone oxidoreductase (complex I, CI) and ubiquinol-cytochrome c oxidoreductase (cytochrome b-c1 complex, complex III, CIII), resulting in various different assemblies (supercomplexes I(1)IV(1), I(1)III(3)IV(2), III(2)IV(1) and III(2)IV(2) as well as larger supercomplexes of compositions like I(1)III(2)IV(5-6)). Cu cation is required as a cofactor.

It localises to the mitochondrion inner membrane. It catalyses the reaction 4 Fe(II)-[cytochrome c] + O2 + 8 H(+)(in) = 4 Fe(III)-[cytochrome c] + 2 H2O + 4 H(+)(out). Its function is as follows. Component of the cytochrome c oxidase, the last enzyme in the mitochondrial electron transport chain which drives oxidative phosphorylation. The respiratory chain contains 3 multisubunit complexes succinate dehydrogenase (complex II, CII), ubiquinol-cytochrome c oxidoreductase (cytochrome b-c1 complex, complex III, CIII) and cytochrome c oxidase (complex IV, CIV), that cooperate to transfer electrons derived from NADH and succinate to molecular oxygen, creating an electrochemical gradient over the inner membrane that drives transmembrane transport and the ATP synthase. Cytochrome c oxidase is the component of the respiratory chain that catalyzes the reduction of oxygen to water. Electrons originating from reduced cytochrome c in the intermembrane space (IMS) are transferred via the dinuclear copper A center (CU(A)) of Cox2 and heme A of Cox1 to the active site in Cox1, a binuclear center (BNC) formed by heme A3 and copper B (CU(B)). The BNC reduces molecular oxygen to 2 water molecules using 4 electrons from cytochrome c in the IMS and 4 protons from the mitochondrial matrix. The sequence is that of Cytochrome c oxidase subunit 2 (cox-2) from Neurospora crassa (strain ATCC 24698 / 74-OR23-1A / CBS 708.71 / DSM 1257 / FGSC 987).